The primary structure comprises 422 residues: Glutamate-1-semialdehyde 2,1-aminomutase (422 aa).

Lysine 258 is subject to N6-(pyridoxal phosphate)lysine.

Belongs to the class-III pyridoxal-phosphate-dependent aminotransferase family. HemL subfamily. In terms of assembly, homodimer. Pyridoxal 5'-phosphate is required as a cofactor.

The protein localises to the cytoplasm. The catalysed reaction is (S)-4-amino-5-oxopentanoate = 5-aminolevulinate. The protein operates within porphyrin-containing compound metabolism; protoporphyrin-IX biosynthesis; 5-aminolevulinate from L-glutamyl-tRNA(Glu): step 2/2. This Chlamydia muridarum (strain MoPn / Nigg) protein is Glutamate-1-semialdehyde 2,1-aminomutase.